The chain runs to 285 residues: 4-diphosphocytidyl-2-C-methyl-D-erythritol kinase (285 aa).

The active site involves lysine 28. Position 109 to 119 (109 to 119 (PVAAGLGGGSA)) interacts with ATP. Residue aspartate 148 is part of the active site.

It belongs to the GHMP kinase family. IspE subfamily.

It catalyses the reaction 4-CDP-2-C-methyl-D-erythritol + ATP = 4-CDP-2-C-methyl-D-erythritol 2-phosphate + ADP + H(+). Its pathway is isoprenoid biosynthesis; isopentenyl diphosphate biosynthesis via DXP pathway; isopentenyl diphosphate from 1-deoxy-D-xylulose 5-phosphate: step 3/6. Its function is as follows. Catalyzes the phosphorylation of the position 2 hydroxy group of 4-diphosphocytidyl-2C-methyl-D-erythritol. This chain is 4-diphosphocytidyl-2-C-methyl-D-erythritol kinase, found in Novosphingobium aromaticivorans (strain ATCC 700278 / DSM 12444 / CCUG 56034 / CIP 105152 / NBRC 16084 / F199).